The chain runs to 444 residues: Protein kinase C and casein kinase substrate in neurons protein 1 (444 aa).

2 positions are modified to phosphoserine: S2 and S79. An F-BAR domain is found at 13–283; that stretch reads EETTDSFWEV…AIRGADAQED (271 aa). Residues 26–275 adopt a coiled-coil conformation; that stretch reads KRTVKRIDDG…HVYRELEQAI (250 aa). Disordered regions lie at residues 173-194 and 309-386; these read REMNSKSEQSVTPEQQKKLQDK and LPHT…DDSK. Position 184 is a phosphothreonine (T184). A compositionally biased stretch (basic and acidic residues) spans 314 to 324; the sequence is TKKEKQPKKAE. Residues 329 to 351 show a composition bias toward polar residues; the sequence is TNATGAVESTSQAGDRGSVSSYD. Residues S346, S348, S349, S361, and S365 each carry the phosphoserine modification. Positions 385–444 constitute an SH3 domain; the sequence is SKGVRVRALYDYDGQEQDELSFKAGDELTKLGEEDEQGWCRGRLDSGQLGLYPANYVEAI. Y394 bears the Phosphotyrosine mark. 2 positions are modified to phosphoserine: S405 and S430.

It belongs to the PACSIN family. Homodimer. May form heterooligomers with other PACSINs. Interacts with both COBL and DBNL. Identified in a complex composed of COBL, PACSIN1 and WASL. Interacts (via SH3 domain) with SYNJ1 and WASL. Interacts (via SH3 domain) with DNM1; the interaction is reduced by DNM1 phosphorylation. Interacts with DNM2 and DNM3. Interacts with MAPT. Interacts with EHD1 and EHD3. Interacts with TRPV4. Post-translationally, phosphorylated by casein kinase 2 (CK2) and protein kinase C (PKC).

The protein localises to the cytoplasm. It is found in the cell projection. It localises to the synapse. The protein resides in the synaptosome. Its subcellular location is the ruffle membrane. The protein localises to the membrane. It is found in the cytoplasmic vesicle membrane. It localises to the cytosol. The protein resides in the cell membrane. Functionally, binds to membranes via its F-BAR domain and mediates membrane tubulation. Plays a role in the reorganization of the microtubule cytoskeleton via its interaction with MAPT; this decreases microtubule stability and inhibits MAPT-induced microtubule polymerization. Plays a role in cellular transport processes by recruiting DNM1, DNM2 and DNM3 to membranes. Plays a role in the reorganization of the actin cytoskeleton and in neuron morphogenesis via its interaction with COBL and WASL, and by recruiting COBL to the cell cortex. Plays a role in the regulation of neurite formation, neurite branching and the regulation of neurite length. Required for normal synaptic vesicle endocytosis; this process retrieves previously released neurotransmitters to accommodate multiple cycles of neurotransmission. Required for normal excitatory and inhibitory synaptic transmission. This is Protein kinase C and casein kinase substrate in neurons protein 1 (Pacsin1) from Pongo abelii (Sumatran orangutan).